Here is a 193-residue protein sequence, read N- to C-terminus: Inner membrane-spanning protein YciB (193 aa).

Transmembrane regions (helical) follow at residues 5 to 25, 36 to 56, 67 to 87, 93 to 113, 138 to 158, and 164 to 184; these read TLDAIKPFLDWIPLIVFFYIY, IIAATTGLLIATLIVYGLMFV, WLVVVLTVVFGGLTMAFQDDF, APIINAVFAFGLAMSPLFLGG, VWVGFFTLMAVLQALFAFVWV, and FTAFGDMIVMVVFMVAQFWFL.

This sequence belongs to the YciB family.

It localises to the cell inner membrane. Plays a role in cell envelope biogenesis, maintenance of cell envelope integrity and membrane homeostasis. This Vitreoscilla sp. (strain C1) protein is Inner membrane-spanning protein YciB.